The sequence spans 536 residues: Small conductance calcium-activated potassium channel protein 1 (536 aa).

Positions Met-1–Gly-90 are disordered. A compositionally biased stretch (acidic residues) spans Gln-65–Asp-75. A helical membrane pass occupies residues Leu-107–Val-127. A helical membrane pass occupies residues Phe-136 to Tyr-156. The helical transmembrane segment at Val-224–His-244 threads the bilayer. The chain crosses the membrane as a helical span at residues Leu-273–Ala-293. The helical transmembrane segment at Phe-313–Val-333 threads the bilayer. The segment at residues Val-342 to Ala-362 is an intramembrane region (pore-forming). The tract at residues Asp-380–Ile-459 is calmodulin-binding. Residues Val-487–Pro-507 traverse the membrane as a helical segment. Residues Ser-514–Gly-536 are disordered. Residues His-515–Gly-536 show a composition bias toward polar residues.

The protein belongs to the potassium channel KCNN family. KCa2.1/KCNN1 subfamily. As to quaternary structure, homodimer. Heteromultimer with KCNN2 and KCNN3. The complex is composed of 4 channel subunits each of which binds to a calmodulin subunit which regulates the channel activity through calcium-binding. Interacts with calmodulin. In terms of tissue distribution, widely expressed including brain.

Its subcellular location is the membrane. The protein resides in the cytoplasm. It is found in the myofibril. It localises to the sarcomere. The protein localises to the z line. The enzyme catalyses K(+)(in) = K(+)(out). Its activity is regulated as follows. Inhibited by bee venom neurotoxin apamin. Inhibited by d-tubocurarine and tetraethylammonium (TEA). Small conductance calcium-activated potassium channel that mediates the voltage-independent transmembrane transfer of potassium across the cell membrane through a constitutive interaction with calmodulin which binds the intracellular calcium allowing its opening. The current is characterized by a voltage-independent activation, an intracellular calcium concentration increase-dependent activation and a single-channel conductance of about 3 picosiemens. Also presents an inwardly rectifying current, thus reducing its already small outward conductance of potassium ions, which is particularly the case when the membrane potential displays positive values, above + 20 mV. Activation is followed by membrane hyperpolarization. Thought to regulate neuronal excitability by contributing to the slow component of synaptic afterhyperpolarization. This is Small conductance calcium-activated potassium channel protein 1 from Rattus norvegicus (Rat).